We begin with the raw amino-acid sequence, 508 residues long: Flavonoid 3',5'-hydroxylase 2 (508 aa).

A heme-binding site is contributed by Cys-443.

This sequence belongs to the cytochrome P450 family. It depends on heme as a cofactor. As to expression, flowers.

It is found in the microsome. Its subcellular location is the endoplasmic reticulum. The enzyme catalyses a 3',5'-unsubstituted flavanone + 2 reduced [NADPH--hemoprotein reductase] + 2 O2 = a 3',5'-dihydroxyflavanone + 2 oxidized [NADPH--hemoprotein reductase] + 2 H2O + 2 H(+). Its pathway is pigment biosynthesis; anthocyanin biosynthesis. Catalyzes the 3'5'-hydroxylation of naringenin and eriodictyol to form 5,7,3,'4',5'-pentahydroxyflavanone and 3',5'-hydroxylation of dihydrokaempferol and dihydroquercetin to form dihydromyricetin. This is Flavonoid 3',5'-hydroxylase 2 (CYP75A3) from Petunia hybrida (Petunia).